Here is a 39-residue protein sequence, read N- to C-terminus: U2-ctenitoxin-Co1a (39 aa).

In terms of processing, disulfide bonds are present. Expressed by the venom gland.

Its subcellular location is the secreted. Omega-agatoxins are antagonists of voltage-gated calcium channels (Cav). This is U2-ctenitoxin-Co1a from Ctenus ornatus (Brazilian spider).